We begin with the raw amino-acid sequence, 430 residues long: Adenylosuccinate synthetase (430 aa).

Residues 12-18 (GDEGKGK) and 40-42 (GHT) contribute to the GTP site. Aspartate 13 serves as the catalytic Proton acceptor. Mg(2+) contacts are provided by aspartate 13 and glycine 40. IMP contacts are provided by residues 13–16 (DEGK), 38–41 (NAGH), threonine 130, arginine 144, glutamine 224, threonine 239, and arginine 303. Histidine 41 acts as the Proton donor in catalysis. 299-305 (VNTGRKR) is a substrate binding site. GTP-binding positions include arginine 305, 331 to 333 (KLD), and 413 to 415 (STS).

It belongs to the adenylosuccinate synthetase family. Homodimer. Mg(2+) is required as a cofactor.

Its subcellular location is the cytoplasm. The catalysed reaction is IMP + L-aspartate + GTP = N(6)-(1,2-dicarboxyethyl)-AMP + GDP + phosphate + 2 H(+). It functions in the pathway purine metabolism; AMP biosynthesis via de novo pathway; AMP from IMP: step 1/2. In terms of biological role, plays an important role in the de novo pathway of purine nucleotide biosynthesis. Catalyzes the first committed step in the biosynthesis of AMP from IMP. The polypeptide is Adenylosuccinate synthetase (Nitrobacter winogradskyi (strain ATCC 25391 / DSM 10237 / CIP 104748 / NCIMB 11846 / Nb-255)).